A 561-amino-acid polypeptide reads, in one-letter code: Liver carboxylesterase B-1 (561 aa).

Positions 1–18 are cleaved as a signal peptide; sequence MCLRSLFLVSLATCVVCG. Residue asparagine 79 is glycosylated (N-linked (GlcNAc...) asparagine). Cysteine 87 and cysteine 116 are joined by a disulfide. The Acyl-ester intermediate role is filled by serine 221. A disulfide bond links cysteine 273 and cysteine 284. Catalysis depends on charge relay system residues glutamate 353 and histidine 466. A Prevents secretion from ER motif is present at residues 558 to 561; it reads HNEL.

The protein belongs to the type-B carboxylesterase/lipase family. Monomer.

Its subcellular location is the endoplasmic reticulum lumen. It catalyses the reaction a carboxylic ester + H2O = an alcohol + a carboxylate + H(+). Functionally, involved in the detoxification of xenobiotics and in the activation of ester and amide prodrugs. This chain is Liver carboxylesterase B-1, found in Rattus norvegicus (Rat).